We begin with the raw amino-acid sequence, 412 residues long: Multifunctional CCA protein (412 aa).

Residues G8 and R11 each coordinate ATP. CTP is bound by residues G8 and R11. Residues D21 and D23 each contribute to the Mg(2+) site. ATP contacts are provided by R91, R137, and R140. The CTP site is built by R91, R137, and R140. The 102-residue stretch at 225 to 326 folds into the HD domain; it reads TGIHVMMVID…ADMLQATDAY (102 aa).

The protein belongs to the tRNA nucleotidyltransferase/poly(A) polymerase family. Bacterial CCA-adding enzyme type 1 subfamily. Monomer. Can also form homodimers and oligomers. Mg(2+) is required as a cofactor. The cofactor is Ni(2+).

The catalysed reaction is a tRNA precursor + 2 CTP + ATP = a tRNA with a 3' CCA end + 3 diphosphate. It carries out the reaction a tRNA with a 3' CCA end + 2 CTP + ATP = a tRNA with a 3' CCACCA end + 3 diphosphate. In terms of biological role, catalyzes the addition and repair of the essential 3'-terminal CCA sequence in tRNAs without using a nucleic acid template. Adds these three nucleotides in the order of C, C, and A to the tRNA nucleotide-73, using CTP and ATP as substrates and producing inorganic pyrophosphate. tRNA 3'-terminal CCA addition is required both for tRNA processing and repair. Also involved in tRNA surveillance by mediating tandem CCA addition to generate a CCACCA at the 3' terminus of unstable tRNAs. While stable tRNAs receive only 3'-terminal CCA, unstable tRNAs are marked with CCACCA and rapidly degraded. The chain is Multifunctional CCA protein from Nitrosomonas eutropha (strain DSM 101675 / C91 / Nm57).